The chain runs to 157 residues: MILGMGTDLCMISRIEKSVERFGDRFLNRVFTEAERAYADRFTGAARMGSYAKRWAAKEACAKALGTGFANGVLLQDIGVCNGPGGAPELLLSGGAEEALKRLTPSGQEAQLLVSMSDDPPFALAQVIIQSVPLAGVQSAPQASVRIEPLANAAKLR.

Mg(2+) contacts are provided by aspartate 8 and glutamate 59.

It belongs to the P-Pant transferase superfamily. AcpS family. Mg(2+) serves as cofactor.

Its subcellular location is the cytoplasm. It catalyses the reaction apo-[ACP] + CoA = holo-[ACP] + adenosine 3',5'-bisphosphate + H(+). Transfers the 4'-phosphopantetheine moiety from coenzyme A to a Ser of acyl-carrier-protein. This chain is Holo-[acyl-carrier-protein] synthase, found in Gluconobacter oxydans (strain 621H) (Gluconobacter suboxydans).